A 586-amino-acid chain; its full sequence is 2-succinyl-5-enolpyruvyl-6-hydroxy-3-cyclohexene-1-carboxylate synthase (586 aa).

It belongs to the TPP enzyme family. MenD subfamily. As to quaternary structure, homodimer. Requires Mg(2+) as cofactor. It depends on Mn(2+) as a cofactor. Thiamine diphosphate is required as a cofactor.

It catalyses the reaction isochorismate + 2-oxoglutarate + H(+) = 5-enolpyruvoyl-6-hydroxy-2-succinyl-cyclohex-3-ene-1-carboxylate + CO2. The protein operates within quinol/quinone metabolism; 1,4-dihydroxy-2-naphthoate biosynthesis; 1,4-dihydroxy-2-naphthoate from chorismate: step 2/7. Its pathway is quinol/quinone metabolism; menaquinone biosynthesis. Functionally, catalyzes the thiamine diphosphate-dependent decarboxylation of 2-oxoglutarate and the subsequent addition of the resulting succinic semialdehyde-thiamine pyrophosphate anion to isochorismate to yield 2-succinyl-5-enolpyruvyl-6-hydroxy-3-cyclohexene-1-carboxylate (SEPHCHC). This is 2-succinyl-5-enolpyruvyl-6-hydroxy-3-cyclohexene-1-carboxylate synthase from Natronomonas pharaonis (strain ATCC 35678 / DSM 2160 / CIP 103997 / JCM 8858 / NBRC 14720 / NCIMB 2260 / Gabara) (Halobacterium pharaonis).